A 507-amino-acid polypeptide reads, in one-letter code: Nucleoporin p54 (507 aa).

9 consecutive repeat copies span residues 5–6, 25–26, 28–29, 53–54, 61–62, 63–64, 67–68, 87–88, and 444–445. A 9 X 2 AA repeats of F-G region spans residues 5 to 445; that stretch reads FGAPSGTSGT…SQIRMQNHFG (441 aa).

The protein belongs to the NUP54 family. In terms of assembly, component of the p62 complex, a complex composed of NUP62, NUP54, and the isoform p58 and isoform p45 of NUP58. Interacts with NUTF2. In terms of processing, O-glycosylated.

The protein localises to the nucleus. Its subcellular location is the nuclear pore complex. It localises to the nucleus membrane. In terms of biological role, component of the nuclear pore complex, a complex required for the trafficking across the nuclear membrane. The protein is Nucleoporin p54 (NUP54) of Homo sapiens (Human).